A 462-amino-acid chain; its full sequence is MAKNDKINFSTPSGFPEFLPSEKRLELYLLDTIRRVYESYGFTPIETPAVERLEVLQAKGNQGDNIIYGIDPILPPNRQAEKDKSGETGSEARALKFDQTVPLAAYIARHLNELTFPFARYQMDVVFRGERAKDGRFRQFRQCDIDVVGREKLSLLYDAQMPAIITEIFEAVHIGDFLIRINNRKVLTGFFQSLDISETQIKSCISIIDNLEKIGEAKVKLELEKEGINPEQTQKIIDFIKIDGSVDDVLDKLKHLSQTLPESEQFNLGVSELETVITGVRNLGVPDKRFCIDLAIARGLNYYTGTVYETTLIGHEALGSICSGGRYEELVGTFIGEKMPGVGISIGLTRLISRLLKAGILNTLPPTPAQVVVVNMQDNLMPTYLKVSQQLRQAGLNVITNFEKRQLGKQFQAADKQGIQFCVIIGADEAAAQKSSLKDLKSGEQVEVALADLPEEVKRRLT.

Belongs to the class-II aminoacyl-tRNA synthetase family. Homodimer.

The protein localises to the cytoplasm. It carries out the reaction tRNA(His) + L-histidine + ATP = L-histidyl-tRNA(His) + AMP + diphosphate + H(+). The protein is Histidine--tRNA ligase of Trichormus variabilis (strain ATCC 29413 / PCC 7937) (Anabaena variabilis).